Consider the following 458-residue polypeptide: Argininosuccinate lyase (458 aa).

This sequence belongs to the lyase 1 family. Argininosuccinate lyase subfamily.

Its subcellular location is the cytoplasm. It carries out the reaction 2-(N(omega)-L-arginino)succinate = fumarate + L-arginine. It functions in the pathway amino-acid biosynthesis; L-arginine biosynthesis; L-arginine from L-ornithine and carbamoyl phosphate: step 3/3. The protein is Argininosuccinate lyase of Salmonella schwarzengrund (strain CVM19633).